A 190-amino-acid chain; its full sequence is 3-isopropylmalate dehydratase small subunit (190 aa).

Belongs to the LeuD family. LeuD type 1 subfamily. As to quaternary structure, heterodimer of LeuC and LeuD.

The catalysed reaction is (2R,3S)-3-isopropylmalate = (2S)-2-isopropylmalate. It participates in amino-acid biosynthesis; L-leucine biosynthesis; L-leucine from 3-methyl-2-oxobutanoate: step 2/4. In terms of biological role, catalyzes the isomerization between 2-isopropylmalate and 3-isopropylmalate, via the formation of 2-isopropylmaleate. This Staphylococcus aureus (strain USA300) protein is 3-isopropylmalate dehydratase small subunit.